Here is a 476-residue protein sequence, read N- to C-terminus: Variant surface glycoprotein MITAT 1.2 (476 aa).

Residues 1–26 form the signal peptide; it reads MPSNQEARLFLAVLVLAQVLPILVDS. 2 disulfides stabilise this stretch: Cys41–Cys171 and Cys149–Cys213. Asn289 is a glycosylation site (N-linked (GlcNAc...) asparagine). Disordered stretches follow at residues 389–418 and 435–459; these read QKHK…CKSP and EEAK…TGSS. Cystine bridges form between Cys407/Cys419 and Cys415/Cys430. Over residues 435–449 the composition is skewed to basic and acidic residues; the sequence is EEAKKVADETAKDGK. Residues 450 to 459 show a composition bias toward low complexity; that stretch reads TGNTNTTGSS. N-linked (GlcNAc...) asparagine glycosylation occurs at Asn454. A lipid anchor (GPI-anchor amidated serine) is attached at Ser459. Residues 460–476 constitute a propeptide, removed in mature form; that stretch reads NSFVISKTPLWLAVLLF.

In terms of assembly, homodimer.

Its subcellular location is the cell membrane. In terms of biological role, VSG forms a coat on the surface of the parasite. The trypanosome evades the immune response of the host by expressing a series of antigenically distinct VSGs from an estimated 1000 VSG genes. The polypeptide is Variant surface glycoprotein MITAT 1.2 (Trypanosoma brucei brucei).